Reading from the N-terminus, the 72-residue chain is Heat-stable enterotoxin A3/A4 (72 aa).

The N-terminal stretch at 1 to 19 (MKKSILFIFLSVLSFSPFA) is a signal peptide. The propeptide occupies 20–53 (QDAKPVESSKEKITLESKKCNIAKKSNKSGPESM). 3 disulfides stabilise this stretch: C59/C64, C60/C68, and C63/C71.

It belongs to the heat-stable enterotoxin family.

The protein resides in the secreted. Its function is as follows. Toxin which activates the particulate form of guanylate cyclase and increases cyclic GMP levels within the host intestinal epithelial cells. This Escherichia coli protein is Heat-stable enterotoxin A3/A4 (sta3).